The primary structure comprises 341 residues: Very-long-chain 3-oxoacyl-CoA reductase (341 aa).

Residues 15 to 35 traverse the membrane as a helical segment; the sequence is VVTAFSVIGIVFTILKFTSFA. Residues V61, D115, N142, K177, Y216, K220, V249, and S251 each contribute to the NADP(+) site. Y216 serves as the catalytic Proton donor. K220 serves as the catalytic Lowers pKa of active site Tyr.

It belongs to the short-chain dehydrogenases/reductases (SDR) family.

The protein localises to the endoplasmic reticulum membrane. It carries out the reaction a very-long-chain (3R)-3-hydroxyacyl-CoA + NADP(+) = a very-long-chain 3-oxoacyl-CoA + NADPH + H(+). It functions in the pathway lipid metabolism; fatty acid biosynthesis. Component of the microsomal membrane bound fatty acid elongation system, which produces the 26-carbon very long-chain fatty acids (VLCFA) from palmitate. Catalyzes the reduction of the 3-ketoacyl-CoA intermediate that is formed in each cycle of fatty acid elongation. VLCFAs serve as precursors for ceramide and sphingolipids. The protein is Very-long-chain 3-oxoacyl-CoA reductase of Schizosaccharomyces pombe (strain 972 / ATCC 24843) (Fission yeast).